The sequence spans 593 residues: MTADSALYIPPYKADDQDIVVELNSRFGAETFTVQPTRTGMPVLWVPRERLIEVLTFLRQVPKPYVMLYDLHGVDERLRTHRRGLPNADFSVFYHLMSLERNSDVMIKVALSERDLNLPTATRIWPNANWYEREVWDMYGITFTGHPHLTRMLMPPTWQGHPLRKDYPARATEFDPYSLSAAKQDLEQEALRFKPEDWGMKRHGENEDYMFLNLGPNHPSAHGAFRIILQLDGEEIIDCVPEIGYHHRGAEKMAERQSWHSFIPYTDRIDYLGGVMNNLPYVLSVEKLAGIKVPQRVDVIRIMMAEFFRILNHLLYLGTYIQDVGAMTPVFFTFTDRQRAYKVVEAITGFRLHPAWYRIGGVAHDLPRGWDKLVREFLDWMPKRLDEYETAALKNSILRGRTIGVAQYNTKEALEWGTTGAGLRATGCDFDLRKARPYSGYENFEFEVPLAHNGDAYDRCMVKMGEMRQSLRIIEQCLKNMPEGPYKADHPLTTPPPKERTLQHIETLITHFLQVSWGPVMPANEAFQMIEATKGINSYYLTSDGSTMSYRTRIRTPSFAHLQQIPSVINGSMIADLIAYLGSIDFVMADVDR.

The segment at Met1–Gln184 is NADH dehydrogenase I subunit C. An NADH dehydrogenase I subunit D region spans residues Asp208 to Arg593.

This sequence in the N-terminal section; belongs to the complex I 30 kDa subunit family. The protein in the C-terminal section; belongs to the complex I 49 kDa subunit family. In terms of assembly, NDH-1 is composed of 13 different subunits. Subunits NuoB, CD, E, F, and G constitute the peripheral sector of the complex.

It is found in the cell inner membrane. The catalysed reaction is a quinone + NADH + 5 H(+)(in) = a quinol + NAD(+) + 4 H(+)(out). NDH-1 shuttles electrons from NADH, via FMN and iron-sulfur (Fe-S) centers, to quinones in the respiratory chain. The immediate electron acceptor for the enzyme in this species is believed to be ubiquinone. Couples the redox reaction to proton translocation (for every two electrons transferred, four hydrogen ions are translocated across the cytoplasmic membrane), and thus conserves the redox energy in a proton gradient. The polypeptide is NADH-quinone oxidoreductase subunit C/D (Pseudomonas paraeruginosa (strain DSM 24068 / PA7) (Pseudomonas aeruginosa (strain PA7))).